The primary structure comprises 317 residues: UV DNA damage endonuclease (317 aa).

This sequence belongs to the uve1/UvsE family.

In terms of biological role, component in a DNA repair pathway. Removal of UV LIGHT damaged nucleotides. Recognizes pyrimidine dimers and cleave a phosphodiester bond immediately 5' to the lesion. The chain is UV DNA damage endonuclease from Bacillus cereus (strain 03BB102).